Reading from the N-terminus, the 468-residue chain is Peroxisome proliferator-activated receptor alpha (468 aa).

The disordered stretch occupies residues 1-20 (MVDTESQICPLSPFGDDDLE). The segment at residues 99–173 (NIECRICGDK…DGMSHNAIRF (75 aa)) is a DNA-binding region (nuclear receptor). 2 NR C4-type zinc fingers span residues 102-122 (CRICGDKASGYHYGVHACEGC) and 139-161 (CDRSCKIQKKNRNKCQYCRFQKC). Residues 239 to 466 (FVIHDMETLC…HPLLQEIYRD (228 aa)) form the NR LBD domain. Residues 304-433 (DQVTLLKYGV…PKLLQKMADL (130 aa)) form a required for heterodimerization with RXRA region.

Belongs to the nuclear hormone receptor family. NR1 subfamily. Heterodimer; with RXRA. This heterodimerization is required for DNA binding and transactivation activity. Interacts with NCOA3 coactivator. Interacts with CITED2; the interaction stimulates its transcriptional activity. Also interacts with PPARBP in vitro. Interacts with AKAP13, LPIN1, PRDM16 and coactivator NCOA6. Interacts with ASXL1 and ASXL2. Interacts with PER2. Interacts with SIRT1; the interaction seems to be modulated by NAD(+) levels. Interacts with CRY1 and CRY2. In hepatocytes, interacts with PAQR3 and HUWE1; the interactions promote PPARA poylubiquitination and HUWE1-mediated degradation. Ubiquitinated by E3 ubiquitin-protein ligase HUWE1; leading to proteasomal degradation. In terms of processing, phosphorylated.

The protein localises to the nucleus. In terms of biological role, ligand-activated transcription factor. Key regulator of lipid metabolism. Activated by the endogenous ligand 1-palmitoyl-2-oleoyl-sn-glycerol-3-phosphocholine (16:0/18:1-GPC). Activated by oleylethanolamide, a naturally occurring lipid that regulates satiety. Receptor for peroxisome proliferators such as hypolipidemic drugs and fatty acids. Regulates the peroxisomal beta-oxidation pathway of fatty acids. Functions as a transcription activator for the ACOX1 and P450 genes. Transactivation activity requires heterodimerization with RXRA and is antagonized by NR2C2. May be required for the propagation of clock information to metabolic pathways regulated by PER2. This is Peroxisome proliferator-activated receptor alpha (PPARA) from Phascolarctos cinereus (Koala).